Here is a 681-residue protein sequence, read N- to C-terminus: Pumilio domain-containing protein C6G9.14 (681 aa).

2 disordered regions span residues 180–210 (RPGL…PGLI) and 273–322 (ASTA…NVPS). 2 stretches are compositionally biased toward low complexity: residues 187 to 210 (TPGP…PGLI) and 273 to 286 (ASTA…SSGS). In terms of domain architecture, PUM-HD spans 319-659 (NVPSLISDDP…RILSKLERRH (341 aa)). Pumilio repeat units follow at residues 342-378 (SLQN…AVFA), 379-414 (ETHP…TFIQ), 415-451 (IIAP…CIVN), 452-487 (ALRP…FIFD), 488-523 (AICE…QLVE), 524-559 (HIVP…AIIS), 560-595 (YFLY…KLIS), and 596-633 (ELMD…ELVE). Positions 656–666 (ERRHPSSKEKP) are enriched in basic and acidic residues. Residues 656–681 (ERRHPSSKEKPIVYSNSERVNTSSSA) are disordered. Polar residues predominate over residues 669–681 (YSNSERVNTSSSA).

The chain is Pumilio domain-containing protein C6G9.14 from Schizosaccharomyces pombe (strain 972 / ATCC 24843) (Fission yeast).